Here is a 796-residue protein sequence, read N- to C-terminus: Ent-copalyl diphosphate synthase 4 (796 aa).

Residues 1–23 constitute a chloroplast transit peptide; the sequence is MSSSSIVTSLLRPTTAADGVLPR. K240 serves as a coordination point for substrate. Residues D371 and D373 each contribute to the Mg(2+) site. The short motif at 371-374 is the DXDD motif element; it reads DVDD. K457 serves as a coordination point for substrate.

It belongs to the terpene synthase family. Tpsc subfamily. Mg(2+) is required as a cofactor. Highly expressed in leaves, and, at low levels, in stems, but barely in roots and flowers.

Its subcellular location is the plastid. It is found in the chloroplast. It carries out the reaction (2E,6E,10E)-geranylgeranyl diphosphate = ent-copalyl diphosphate. It participates in secondary metabolite biosynthesis; terpenoid biosynthesis. Involved in the biosynthesis of ent-kaurene diterpenoids natural products such as oridonin, miltiradiene, eriocalyxin B and nezukol, known to exhibit antitumor, anti-inflammatory and antibacterial activities. Catalyzes the conversion of (2E,6E,10E)-geranylgeranyl diphosphate (GGPP) to ent-copalyl diphosphate (ent-CPP). This chain is Ent-copalyl diphosphate synthase 4, found in Isodon rubescens (Rabdosia rubescens).